We begin with the raw amino-acid sequence, 546 residues long: Chaperonin GroEL (546 aa).

Residues 30 to 33, 87 to 91, glycine 414, 477 to 479, and aspartate 493 each bind ATP; these read TLGP, DGTTT, and NAL.

The protein belongs to the chaperonin (HSP60) family. Forms a cylinder of 14 subunits composed of two heptameric rings stacked back-to-back. Interacts with the co-chaperonin GroES.

The protein localises to the cytoplasm. The enzyme catalyses ATP + H2O + a folded polypeptide = ADP + phosphate + an unfolded polypeptide.. Its function is as follows. Together with its co-chaperonin GroES, plays an essential role in assisting protein folding. The GroEL-GroES system forms a nano-cage that allows encapsulation of the non-native substrate proteins and provides a physical environment optimized to promote and accelerate protein folding. The protein is Chaperonin GroEL of Syntrophomonas wolfei subsp. wolfei (strain DSM 2245B / Goettingen).